Reading from the N-terminus, the 250-residue chain is UPF0259 membrane protein SG1383 (250 aa).

6 helical membrane-spanning segments follow: residues 20-40 (FASI…LGHA), 86-106 (AGTL…LTMI), 121-141 (IGLS…TTLL), 146-166 (LLLI…APVI), 191-211 (LLAP…LLAT), and 219-239 (LVAV…LLIY).

Belongs to the UPF0259 family.

It localises to the cell inner membrane. The polypeptide is UPF0259 membrane protein SG1383 (Sodalis glossinidius (strain morsitans)).